We begin with the raw amino-acid sequence, 347 residues long: Ribosomal RNA small subunit methyltransferase C (347 aa).

It belongs to the methyltransferase superfamily. RsmC family. As to quaternary structure, monomer.

It is found in the cytoplasm. It catalyses the reaction guanosine(1207) in 16S rRNA + S-adenosyl-L-methionine = N(2)-methylguanosine(1207) in 16S rRNA + S-adenosyl-L-homocysteine + H(+). Functionally, specifically methylates the guanine in position 1207 of 16S rRNA in the 30S particle. In Shewanella putrefaciens (strain CN-32 / ATCC BAA-453), this protein is Ribosomal RNA small subunit methyltransferase C.